Consider the following 290-residue polypeptide: Nucleotide-binding protein Bpet0443 (290 aa).

G9 to S16 provides a ligand contact to ATP. Residue D58–S61 coordinates GTP.

This sequence belongs to the RapZ-like family.

In terms of biological role, displays ATPase and GTPase activities. This Bordetella petrii (strain ATCC BAA-461 / DSM 12804 / CCUG 43448) protein is Nucleotide-binding protein Bpet0443.